The primary structure comprises 185 residues: Large ribosomal subunit protein uL5 (185 aa).

This sequence belongs to the universal ribosomal protein uL5 family. As to quaternary structure, part of the 50S ribosomal subunit; part of the 5S rRNA/L5/L18/L25 subcomplex. Contacts the 5S rRNA and the P site tRNA. Forms a bridge to the 30S subunit in the 70S ribosome.

In terms of biological role, this is one of the proteins that bind and probably mediate the attachment of the 5S RNA into the large ribosomal subunit, where it forms part of the central protuberance. In the 70S ribosome it contacts protein S13 of the 30S subunit (bridge B1b), connecting the 2 subunits; this bridge is implicated in subunit movement. Contacts the P site tRNA; the 5S rRNA and some of its associated proteins might help stabilize positioning of ribosome-bound tRNAs. The protein is Large ribosomal subunit protein uL5 of Caulobacter sp. (strain K31).